Here is a 196-residue protein sequence, read N- to C-terminus: UMP-CMP kinase (196 aa).

ATP is bound at residue 13-18 (GAGKGT). Ser33 bears the Phosphoserine mark. Residues 33 to 63 (SAGELLRDERKNPDSQYGELIEKYIKDGKIV) form an NMP region. Arg39 contacts a ribonucleoside 5'-phosphate. An N6-acetyllysine mark is found at Lys43 and Lys55. A ribonucleoside 5'-phosphate contacts are provided by residues 61-63 (KIV) and 93-96 (GFPR). Position 100 (Asn100) interacts with CMP. The residue at position 106 (Lys106) is an N6-succinyllysine. The tract at residues 133 to 143 (ERGKSSGRSDD) is LID. ATP is bound at residue Arg134. Residues Arg140 and Arg151 each contribute to the a ribonucleoside 5'-phosphate site. An ATP-binding site is contributed by Lys179. Ser180 carries the phosphoserine modification.

This sequence belongs to the adenylate kinase family. UMP-CMP kinase subfamily. Monomer. Mg(2+) serves as cofactor.

The protein localises to the nucleus. It localises to the cytoplasm. The enzyme catalyses CMP + ATP = CDP + ADP. The catalysed reaction is dCMP + ATP = dCDP + ADP. It carries out the reaction UMP + ATP = UDP + ADP. It catalyses the reaction a 2'-deoxyribonucleoside 5'-diphosphate + ATP = a 2'-deoxyribonucleoside 5'-triphosphate + ADP. The enzyme catalyses a ribonucleoside 5'-diphosphate + ATP = a ribonucleoside 5'-triphosphate + ADP. Functionally, catalyzes the phosphorylation of pyrimidine nucleoside monophosphates at the expense of ATP. Plays an important role in de novo pyrimidine nucleotide biosynthesis. Has preference for UMP and CMP as phosphate acceptors. Also displays broad nucleoside diphosphate kinase activity. The chain is UMP-CMP kinase from Bos taurus (Bovine).